The primary structure comprises 336 residues: UPF0324 membrane protein spr0034 (336 aa).

The next 8 membrane-spanning stretches (helical) occupy residues 65-84 (LLQY…QVFA), 91-113 (PVIL…FFAL), 118-140 (ATLV…APVI), 153-175 (VIFF…LHLS), 211-233 (SATI…LSYW), 249-271 (VFPL…TSLG), 286-305 (FLIV…VAMV), and 312-334 (ILLG…TLIG).

It belongs to the UPF0324 family.

Its subcellular location is the cell membrane. The polypeptide is UPF0324 membrane protein spr0034 (Streptococcus pneumoniae (strain ATCC BAA-255 / R6)).